We begin with the raw amino-acid sequence, 762 residues long: Phosphoribosylformylglycinamidine synthase subunit PurL (762 aa).

His58 is a catalytic residue. Tyr61 and Lys105 together coordinate ATP. Glu107 contributes to the Mg(2+) binding site. Substrate-binding positions include 108–111 (SHNH) and Arg130. Catalysis depends on His109, which acts as the Proton acceptor. Asp131 contacts Mg(2+). Residue Gln260 coordinates substrate. Asp288 provides a ligand contact to Mg(2+). 332–334 (ESQ) is a substrate binding site. ATP contacts are provided by Asn520 and Gly557. Asn558 contributes to the Mg(2+) binding site. Ser560 provides a ligand contact to substrate.

Belongs to the FGAMS family. As to quaternary structure, monomer. Part of the FGAM synthase complex composed of 1 PurL, 1 PurQ and 2 PurS subunits.

It localises to the cytoplasm. The catalysed reaction is N(2)-formyl-N(1)-(5-phospho-beta-D-ribosyl)glycinamide + L-glutamine + ATP + H2O = 2-formamido-N(1)-(5-O-phospho-beta-D-ribosyl)acetamidine + L-glutamate + ADP + phosphate + H(+). It functions in the pathway purine metabolism; IMP biosynthesis via de novo pathway; 5-amino-1-(5-phospho-D-ribosyl)imidazole from N(2)-formyl-N(1)-(5-phospho-D-ribosyl)glycinamide: step 1/2. Part of the phosphoribosylformylglycinamidine synthase complex involved in the purines biosynthetic pathway. Catalyzes the ATP-dependent conversion of formylglycinamide ribonucleotide (FGAR) and glutamine to yield formylglycinamidine ribonucleotide (FGAM) and glutamate. The FGAM synthase complex is composed of three subunits. PurQ produces an ammonia molecule by converting glutamine to glutamate. PurL transfers the ammonia molecule to FGAR to form FGAM in an ATP-dependent manner. PurS interacts with PurQ and PurL and is thought to assist in the transfer of the ammonia molecule from PurQ to PurL. In Rhodococcus erythropolis (strain PR4 / NBRC 100887), this protein is Phosphoribosylformylglycinamidine synthase subunit PurL.